The chain runs to 322 residues: Ferrochelatase (322 aa).

2 residues coordinate Fe cation: histidine 194 and glutamate 275.

This sequence belongs to the ferrochelatase family.

It localises to the cytoplasm. It carries out the reaction heme b + 2 H(+) = protoporphyrin IX + Fe(2+). Its pathway is porphyrin-containing compound metabolism; protoheme biosynthesis; protoheme from protoporphyrin-IX: step 1/1. Its function is as follows. Catalyzes the ferrous insertion into protoporphyrin IX. The chain is Ferrochelatase from Proteus mirabilis (strain HI4320).